An 89-amino-acid chain; its full sequence is Small ribosomal subunit protein uS15 (89 aa).

Belongs to the universal ribosomal protein uS15 family. As to quaternary structure, part of the 30S ribosomal subunit. Forms a bridge to the 50S subunit in the 70S ribosome, contacting the 23S rRNA.

Functionally, one of the primary rRNA binding proteins, it binds directly to 16S rRNA where it helps nucleate assembly of the platform of the 30S subunit by binding and bridging several RNA helices of the 16S rRNA. In terms of biological role, forms an intersubunit bridge (bridge B4) with the 23S rRNA of the 50S subunit in the ribosome. The polypeptide is Small ribosomal subunit protein uS15 (Roseobacter denitrificans (strain ATCC 33942 / OCh 114) (Erythrobacter sp. (strain OCh 114))).